Reading from the N-terminus, the 144-residue chain is NADPH-dependent 7-cyano-7-deazaguanine reductase (144 aa).

Over residues 1–21 (MSQSPIQNPTSDPNAQSVQET) the composition is skewed to polar residues. The interval 1–27 (MSQSPIQNPTSDPNAQSVQETSESKYG) is disordered. C61 functions as the Thioimide intermediate in the catalytic mechanism. Catalysis depends on D68, which acts as the Proton donor. Substrate-binding positions include 83–85 (VEL) and 102–103 (HE).

It belongs to the GTP cyclohydrolase I family. QueF type 1 subfamily.

It is found in the cytoplasm. It catalyses the reaction 7-aminomethyl-7-carbaguanine + 2 NADP(+) = 7-cyano-7-deazaguanine + 2 NADPH + 3 H(+). It participates in tRNA modification; tRNA-queuosine biosynthesis. Functionally, catalyzes the NADPH-dependent reduction of 7-cyano-7-deazaguanine (preQ0) to 7-aminomethyl-7-deazaguanine (preQ1). This chain is NADPH-dependent 7-cyano-7-deazaguanine reductase, found in Acaryochloris marina (strain MBIC 11017).